A 526-amino-acid polypeptide reads, in one-letter code: Cytochrome P450 monooxygenase ucsK (526 aa).

The helical transmembrane segment at 7–27 (PVLAAATAVSFGFYLAGLFVY) threads the bilayer. A glycan (N-linked (GlcNAc...) asparagine) is linked at Asn-403. Heme is bound at residue Cys-467.

It belongs to the cytochrome P450 family. The cofactor is heme.

The protein localises to the membrane. Its pathway is mycotoxin biosynthesis. Its function is as follows. Cytochrome P450 monooxygenase; part of the gene cluster that mediates the biosynthesis of UCS1025A, a member of the pyrrolizidinone family that acts as a strong telomerase inhibitor and displays potent antibacterial and antitumor properties. These compounds share a hemiaminal-containing pyrrolizidinone core fused with a gamma-lactone, giving a furopyrrolizidine that is connected to a decalin fragment. The polyketide synthase module (PKS) of the PKS-NRPS ucsA is responsible for the synthesis of the polyketide backbone via the condensation of an acetyl-CoA starter unit with 6 malonyl-CoA units. The downstream nonribosomal peptide synthetase (NRPS) module then amidates the carboxyl end of the polyketide with a 2S,3S-methylproline derived from L-isoleucine by the 2-oxoglutarate-dependent dioxygenase ucsF which converts L-isoleucine to (4S,5S)-4-methylpyrroline-5-carboxylate that is further converted to 2S,3S-methylproline by the pyrroline-5-carboxylate reductase ucsG. Reductive release of the completed aminoacyl polyketide from the assembly line can form the 3-pyrrolin-2-one structure via an intramolecular Knoevenagel reaction. Because ucsA lacks a designated enoylreductase (ER) domain, the required activity is provided the enoyl reductase ucsL. This keto acyclic precursor is the substrate of the Diels-Alderase ucsH, that catalyzes the Diels-Alder cycloaddition. Oxidation of the 3S-methyl group to a carboxylate by the cytochrome P450 monooxygenase ucsK allows an oxa-Michael cyclization that might involve the reductase/dehydrogenase ucsI and which furnishes the furopyrrolizidine. The oxidase ucsJ likely plays a critical role in stereoselective reduction of the C5-C6 double bond to afford the required R-configured carboxylate group. Further enolization and oxidation at C5 by an unidentified enzyme affords the last intermediate that can undergo oxa-Michael cyclization to yield UCS1025A. The polypeptide is Cytochrome P450 monooxygenase ucsK (Acremonium sp).